A 447-amino-acid polypeptide reads, in one-letter code: N-succinylarginine dihydrolase (447 aa).

Substrate is bound by residues 19-28 (AGLSFGNKAS), asparagine 110, and 137-138 (HR). The active site involves glutamate 174. Arginine 212 is a substrate binding site. Histidine 248 is a catalytic residue. Substrate is bound by residues aspartate 250 and asparagine 359. The Nucleophile role is filled by cysteine 365.

It belongs to the succinylarginine dihydrolase family. In terms of assembly, homodimer.

The enzyme catalyses N(2)-succinyl-L-arginine + 2 H2O + 2 H(+) = N(2)-succinyl-L-ornithine + 2 NH4(+) + CO2. The protein operates within amino-acid degradation; L-arginine degradation via AST pathway; L-glutamate and succinate from L-arginine: step 2/5. Catalyzes the hydrolysis of N(2)-succinylarginine into N(2)-succinylornithine, ammonia and CO(2). The sequence is that of N-succinylarginine dihydrolase from Escherichia coli O157:H7.